The sequence spans 275 residues: Ribosomal RNA small subunit methyltransferase A (275 aa).

6 residues coordinate S-adenosyl-L-methionine: Asn28, Leu30, Gly55, Glu77, Asp103, and Asn123.

It belongs to the class I-like SAM-binding methyltransferase superfamily. rRNA adenine N(6)-methyltransferase family. RsmA subfamily.

Its subcellular location is the cytoplasm. It catalyses the reaction adenosine(1518)/adenosine(1519) in 16S rRNA + 4 S-adenosyl-L-methionine = N(6)-dimethyladenosine(1518)/N(6)-dimethyladenosine(1519) in 16S rRNA + 4 S-adenosyl-L-homocysteine + 4 H(+). Functionally, specifically dimethylates two adjacent adenosines (A1518 and A1519) in the loop of a conserved hairpin near the 3'-end of 16S rRNA in the 30S particle. May play a critical role in biogenesis of 30S subunits. The polypeptide is Ribosomal RNA small subunit methyltransferase A (Rhizobium etli (strain CIAT 652)).